The chain runs to 129 residues: MLSYCLLVTGPAYGTQQASSALQFAQALLAEGHRLKSVFFYREGVLNANQLTSPANDEFDLVRAWQLLGETHQVALNVCVAAALRRGVTDAQQAAQLNLAGANLQPGFVLSGLGELAQSVLTCDRVIQF.

Residue C79 is the Cysteine persulfide intermediate of the active site.

It belongs to the DsrE/TusD family. In terms of assembly, heterohexamer, formed by a dimer of trimers. The hexameric TusBCD complex contains 2 copies each of TusB, TusC and TusD. The TusBCD complex interacts with TusE.

The protein resides in the cytoplasm. Part of a sulfur-relay system required for 2-thiolation of 5-methylaminomethyl-2-thiouridine (mnm(5)s(2)U) at tRNA wobble positions. Accepts sulfur from TusA and transfers it in turn to TusE. This chain is Sulfurtransferase TusD, found in Pectobacterium carotovorum subsp. carotovorum (strain PC1).